The chain runs to 446 residues: MLITVVGLNHRTAPLAVREKLSFPEHTLKEVLRGLSDREGVESCVVISTCNRTEVYAVLSEEDGLQNIWCFLAERCGSPVEAIKSHTYNYSFGESVRHLFRVSSGLDSMVLGETQILGQVKQAYQFAQQVGTVNWLLNCAFQQALAVGKRVRTETGIDKNPVSISYAAVELARQTLGSLEGREVLIVGAGKMSELTVKHLLSHGVAGVIVSNRSYPRAVELAAQFGGRAVRFDELYRWMGHADIVISCTAASHYVIRAEPMTSVLAERGGRAIFFIDIAVPRDVDPAVGHLPGVVLYDIDSLQSVVDANLAERRRAAVAAERIIDAEVREFLLALGSRFVIPTVVALKKRGEEIKRNELDRALNRLGGELSERELKVISSMANSIVSQLLHEPITRLKKLALTPEGHFYSDALQKLFNLEPENGGVPTLVGRTESCPVSCLKGKGC.

Substrate is bound by residues 49 to 52, Ser108, 113 to 115, and Gln119; these read TCNR and ETQ. The active-site Nucleophile is Cys50. An NADP(+)-binding site is contributed by 188–193; the sequence is GAGKMS.

The protein belongs to the glutamyl-tRNA reductase family. In terms of assembly, homodimer.

The catalysed reaction is (S)-4-amino-5-oxopentanoate + tRNA(Glu) + NADP(+) = L-glutamyl-tRNA(Glu) + NADPH + H(+). Its pathway is porphyrin-containing compound metabolism; protoporphyrin-IX biosynthesis; 5-aminolevulinate from L-glutamyl-tRNA(Glu): step 1/2. Catalyzes the NADPH-dependent reduction of glutamyl-tRNA(Glu) to glutamate 1-semialdehyde (GSA). The polypeptide is Glutamyl-tRNA reductase (Desulforudis audaxviator (strain MP104C)).